The sequence spans 2194 residues: Supervillin (2194 aa).

Residues 1–174 are interaction with MYLK; the sequence is MKRKERIARR…SSYSRTELSG (174 aa). 8 disordered regions span residues 35–98, 118–335, 388–414, 450–500, 513–563, 589–667, 685–719, and 739–791; these read LEED…TQSL, EKYG…QRRH, PESI…KVLE, EDRG…TERM, AVSQ…QTSK, RASR…KVDE, KSFD…QPVT, and HPVM…DSST. Residue Ser50 is modified to Phosphoserine. The segment covering 87 to 98 has biased composition (polar residues); the sequence is PYSSGIMDTQSL. Composition is skewed to basic and acidic residues over residues 139–161 and 181–192; these read SRKD…ESSR and ESKDYGLHRSDG. A phosphoserine mark is found at Ser245 and Ser262. Composition is skewed to basic and acidic residues over residues 283–294 and 308–319; these read PKHEWFLQKDSE and KVREKLVREESA. The segment covering 320–330 has biased composition (polar residues); sequence RSSPELTSESL. Phosphoserine occurs at positions 321 and 322. Residues 455–467 show a composition bias toward polar residues; that stretch reads GRSQEAPSGTEDL. Over residues 540–551 the composition is skewed to low complexity; it reads PPQLQALKAKAP. 2 stretches are compositionally biased toward basic and acidic residues: residues 592 to 615 and 626 to 635; these read RKPE…ERGS and ENRKTSERFR. A phosphoserine mark is found at Ser652 and Ser686. Residues 704 to 714 are compositionally biased toward basic and acidic residues; sequence QRLRRLQDRSH. Phosphoserine occurs at positions 747 and 781. Residues 770–782 are compositionally biased toward basic and acidic residues; the sequence is LARDQTNESKDSA. Tyr829 is subject to Phosphotyrosine. Thr831 is subject to Phosphothreonine. A phosphoserine mark is found at Ser893, Ser899, Ser903, Ser947, Ser979, and Ser1031. The segment at 1036–1077 is disordered; it reads EFGEPTSEQTGAAAGKPAAPTATPVSWKPQDPSEQPQEKRYQ. Positions 1045-1059 are enriched in low complexity; sequence TGAAAGKPAAPTATP. A phosphoserine mark is found at Ser1099 and Ser1205. The residue at position 1210 (Thr1210) is a Phosphothreonine. Residues Ser1214, Ser1302, and Ser1385 each carry the phosphoserine modification. The interaction with NEB stretch occupies residues 1399 to 1667; the sequence is SNVSLRSVNL…KFLDWTELKR (269 aa). 5 Gelsolin-like repeats span residues 1421-1520, 1540-1662, 1732-1842, 1861-1962, and 1995-2102; these read KKLM…LGGQ, IETN…FLDW, ISVD…FQGG, WRLY…LGRR, and ATEF…FPSW. Residues 2131-2194 form the HP domain; that stretch reads KLCKTIYPLA…VNLKKAKGLF (64 aa).

It belongs to the villin/gelsolin family. Associates with F-actin. Interacts with NEB. Interacts with MYH9. Interacts with MYLK. Interacts with TASOR. As to quaternary structure, interacts with TRIP6 and DYNLT1. Interacts with KIF14; at midbody during cytokinesis.

Its subcellular location is the cell membrane. The protein localises to the cytoplasm. It localises to the cytoskeleton. It is found in the cell projection. The protein resides in the invadopodium. Its subcellular location is the podosome. The protein localises to the midbody. It localises to the cleavage furrow. Its function is as follows. Forms a high-affinity link between the actin cytoskeleton and the membrane. Is among the first costameric proteins to assemble during myogenesis and it contributes to myogenic membrane structure and differentiation. Appears to be involved in myosin II assembly. May modulate myosin II regulation through MLCK during cell spreading, an initial step in cell migration. May play a role in invadopodial function. In terms of biological role, may be involved in modulation of focal adhesions. Supervillin-mediated down-regulation of focal adhesions involves binding to TRIP6. Plays a role in cytokinesis through KIF14 interaction. The sequence is that of Supervillin from Bos taurus (Bovine).